The chain runs to 84 residues: Small ribosomal subunit protein eS27z (84 aa).

The C4-type zinc finger occupies 39 to 61 (CQGCFNITTVFSHSQTVVMCGNC).

This sequence belongs to the eukaryotic ribosomal protein eS27 family. As to quaternary structure, (Microbial infection) May interact with Tomato yellow leaf curl virus (TYLCV) and papaya leaf curl China virus (PaLcuCNV) C2 proteins. This interaction prevents activation of Jasmonate signaling, thereby facilitating viral uptake by insects vectors. The cofactor is Zn(2+).

This chain is Small ribosomal subunit protein eS27z (RPS27A), found in Arabidopsis thaliana (Mouse-ear cress).